We begin with the raw amino-acid sequence, 326 residues long: Nine-heme cytochrome c (326 aa).

A signal peptide spans 1–30; that stretch reads MRNGTSLLLLAAIALAGAACLTAMGGTAKA. H67, H70, C77, C80, H81, H82, C89, C92, H93, H111, C127, C130, H131, C141, C144, H145, C157, C160, H161, H227, H230, H248, C255, C258, H259, H260, C271, C274, H275, H294, C297, C300, H301, C314, C317, and H318 together coordinate heme.

Monomer. Post-translationally, binds 9 heme groups per subunit.

Its subcellular location is the periplasm. Functionally, may form part of a transmembrane redox complex through which electrons are transferred to the cytoplasm for reduction of sulfate. The polypeptide is Nine-heme cytochrome c (Desulfovibrio desulfuricans (strain ATCC 27774 / DSM 6949 / MB)).